The chain runs to 1500 residues: Carbamoyl-phosphate synthase [ammonia], mitochondrial (1500 aa).

The N-terminal 38 residues, 1–38 (MTRILTAFKVVRTLKTGFGFTNVTAHQKWKFSRPGIRL), are a transit peptide targeting the mitochondrion. The tract at residues 39-218 (LSVKAQTAHI…VKVYGKGNPT (180 aa)) is anthranilate phosphoribosyltransferase homolog. 3 positions are modified to N6-acetyllysine; alternate: Lys-55, Lys-57, and Lys-119. Lys-55 carries the post-translational modification N6-glutaryllysine; alternate. Residues Lys-55, Lys-57, and Lys-119 each carry the N6-succinyllysine; alternate modification. Ser-148 carries the post-translational modification Phosphoserine. N6-acetyllysine; alternate occurs at positions 157 and 171. Lys-157 bears the N6-succinyllysine; alternate mark. Residue Lys-171 is modified to N6-glutaryllysine; alternate. Lys-176 carries the N6-glutaryllysine modification. Lys-182 and Lys-197 each carry N6-acetyllysine. Residues Lys-207, Lys-210, Lys-214, Lys-219, and Lys-228 each carry the N6-acetyllysine; alternate modification. N6-glutaryllysine; alternate occurs at positions 207, 210, 214, 219, and 228. Lys-207 carries the post-translational modification N6-succinyllysine; alternate. The residue at position 214 (Lys-214) is an N6-succinyllysine; alternate. Positions 219–404 (KVVAVDCGIK…FSLIKKGKAT (186 aa)) constitute a Glutamine amidotransferase type-1 domain. Lys-237 is subject to N6-glutaryllysine. Lys-280, Lys-287, Lys-307, and Lys-310 each carry N6-acetyllysine; alternate. Position 280 is an N6-glutaryllysine; alternate (Lys-280). Lys-287 and Lys-307 each carry N6-succinyllysine; alternate. Residues Lys-307 and Lys-310 each carry the N6-glutaryllysine; alternate modification. The residue at position 400 (Lys-400) is an N6-succinyllysine. 4 positions are modified to N6-glutaryllysine; alternate: Lys-402, Lys-412, Lys-453, and Lys-458. Lys-402 and Lys-412 each carry N6-succinyllysine; alternate. An N6-acetyllysine; alternate mark is found at Lys-412, Lys-453, Lys-458, Lys-522, Lys-527, and Lys-532. Residues Lys-458, Lys-522, and Lys-527 each carry the N6-succinyllysine; alternate modification. N6-glutaryllysine; alternate occurs at positions 527 and 532. Ser-537 carries the post-translational modification Phosphoserine; alternate. Ser-537 carries O-linked (GlcNAc) serine; alternate glycosylation. Residue Ser-540 is modified to Phosphoserine. In terms of domain architecture, ATP-grasp 1 spans 551-743 (SDKLNEINEK…LAFIAAKIAL (193 aa)). An N6-acetyllysine; alternate mark is found at Lys-553 and Lys-560. The residue at position 553 (Lys-553) is an N6-glutaryllysine; alternate. N6-succinyllysine; alternate occurs at positions 553 and 560. Ser-569 is subject to Phosphoserine. N6-acetyllysine; alternate occurs at positions 575 and 612. Lys-575 and Lys-612 each carry N6-succinyllysine; alternate. N6-acetyllysine is present on Lys-630. At Lys-728 the chain carries N6-glutaryllysine. Lys-751, Lys-757, Lys-772, Lys-793, Lys-811, and Lys-831 each carry N6-acetyllysine; alternate. Residues Lys-751 and Lys-757 each carry the N6-succinyllysine; alternate modification. 4 positions are modified to N6-glutaryllysine; alternate: Lys-757, Lys-772, Lys-793, and Lys-811. Lys-793 carries the post-translational modification N6-succinyllysine; alternate. Position 831 is an N6-succinyllysine; alternate (Lys-831). Residue Ser-835 is modified to Phosphoserine. 2 positions are modified to N6-acetyllysine; alternate: Lys-841 and Lys-856. Lys-841 and Lys-856 each carry N6-glutaryllysine; alternate. At Lys-869 the chain carries N6-glutaryllysine. N6-acetyllysine; alternate is present on residues Lys-875, Lys-889, and Lys-892. Lys-875, Lys-889, and Lys-892 each carry N6-glutaryllysine; alternate. 3 positions are modified to N6-succinyllysine; alternate: Lys-875, Lys-889, and Lys-892. Ser-896 and Ser-898 each carry phosphoserine. Lys-905 is modified (N6-glutaryllysine). Lys-908, Lys-915, and Lys-919 each carry N6-acetyllysine; alternate. Lys-908, Lys-915, and Lys-919 each carry N6-glutaryllysine; alternate. 2 positions are modified to N6-succinyllysine; alternate: Lys-915 and Lys-919. Residue Lys-935 is modified to N6-acetyllysine. A Phosphoserine modification is found at Ser-1036. Lys-1074 carries the N6-acetyllysine; alternate modification. Lys-1074 carries the post-translational modification N6-glutaryllysine; alternate. At Lys-1074 the chain carries N6-succinyllysine; alternate. Ser-1079, Ser-1090, and Ser-1093 each carry phosphoserine. An ATP-grasp 2 domain is found at 1093-1284 (SAVLDELKVA…FIDVATKVMI (192 aa)). At Lys-1100 the chain carries N6-acetyllysine; alternate. Lys-1100 is subject to N6-succinyllysine; alternate. Lys-1149 is subject to N6-succinyllysine. Lys-1150 carries the post-translational modification N6-glutaryllysine. N6-acetyllysine; alternate is present on residues Lys-1168 and Lys-1183. Residues Lys-1168 and Lys-1183 each carry the N6-glutaryllysine; alternate modification. Lys-1168 and Lys-1183 each carry N6-succinyllysine; alternate. Ser-1203 bears the Phosphoserine mark. Position 1222 is an N6-acetyllysine (Lys-1222). Lys-1224 carries the post-translational modification N6-glutaryllysine. N6-acetyllysine; alternate occurs at positions 1232, 1269, and 1291. Residues Lys-1232, Lys-1269, and Lys-1291 each carry the N6-succinyllysine; alternate modification. An O-linked (GlcNAc) serine glycan is attached at Ser-1331. O-linked (GlcNAc) threonine glycosylation occurs at Thr-1332. One can recognise an MGS-like domain in the interval 1355–1500 (FKIPQKGILI…YRQYSAGKAA (146 aa)). N6-acetyllysine; alternate is present on Lys-1356. Lys-1356 and Lys-1360 each carry N6-glutaryllysine; alternate. Lys-1356 and Lys-1360 each carry N6-succinyllysine; alternate. Residues Thr-1391, Thr-1394, and Trp-1410 each coordinate N-acetyl-L-glutamate. Phosphoserine is present on residues Ser-1419 and Ser-1431. Residues Asn-1437 and Asn-1440 each contribute to the N-acetyl-L-glutamate site. An N6-acetyllysine; alternate modification is found at Lys-1444. At Lys-1444 the chain carries N6-succinyllysine; alternate. N-acetyl-L-glutamate is bound at residue Asn-1449. N6-acetyllysine; alternate occurs at positions 1471, 1479, and 1486. 3 positions are modified to N6-succinyllysine; alternate: Lys-1471, Lys-1479, and Lys-1486. N6-glutaryllysine; alternate occurs at positions 1479 and 1486.

As to quaternary structure, can form homooligomers (monomers as predominant form and dimers). In terms of processing, undergoes proteolytic cleavage in the C-terminal region corresponding to the loss of approximately 12 AA residues from the C-terminus. Post-translationally, succinylated at Lys-287 and Lys-1291. Desuccinylated at Lys-1291 by SIRT5, leading to activation. Glutarylated. Glutarylation levels increase during fasting. Deglutarylated by SIRT5 at Lys-55, Lys-219, Lys-412, Lys-889, Lys-892, Lys-915, Lys-1360 and Lys-1486, leading to activation. Primarily in the liver and small intestine.

It localises to the mitochondrion. The protein resides in the nucleus. It is found in the nucleolus. The protein localises to the cell membrane. It carries out the reaction hydrogencarbonate + NH4(+) + 2 ATP = carbamoyl phosphate + 2 ADP + phosphate + 2 H(+). With respect to regulation, requires N-acetyl-L-glutamate (NAG) as an allosteric activator. Activated by glycerol in the absence of NAG, whereas in the presence of NAG it is inhibited by increasing concentrations of glycerol. Involved in the urea cycle of ureotelic animals where the enzyme plays an important role in removing excess ammonia from the cell. The chain is Carbamoyl-phosphate synthase [ammonia], mitochondrial (CPS1) from Homo sapiens (Human).